The sequence spans 126 residues: UPF0102 protein Mlg_2205 (126 aa).

The protein belongs to the UPF0102 family.

This is UPF0102 protein Mlg_2205 from Alkalilimnicola ehrlichii (strain ATCC BAA-1101 / DSM 17681 / MLHE-1).